The sequence spans 289 residues: Energy-coupling factor transporter ATP-binding protein EcfA2 (289 aa).

The ABC transporter domain maps to 7-251; sequence IILDNVSYTY…IELLTKIEID (245 aa). 44–51 lines the ATP pocket; that stretch reads GTTGSGKS.

Belongs to the ABC transporter superfamily. Energy-coupling factor EcfA family. As to quaternary structure, forms a stable energy-coupling factor (ECF) transporter complex composed of 2 membrane-embedded substrate-binding proteins (S component), 2 ATP-binding proteins (A component) and 2 transmembrane proteins (T component).

Its subcellular location is the cell membrane. Functionally, ATP-binding (A) component of a common energy-coupling factor (ECF) ABC-transporter complex. Unlike classic ABC transporters this ECF transporter provides the energy necessary to transport a number of different substrates. The chain is Energy-coupling factor transporter ATP-binding protein EcfA2 from Mycoplasma capricolum subsp. capricolum (strain California kid / ATCC 27343 / NCTC 10154).